Reading from the N-terminus, the 1009-residue chain is Ulvan lyase, long isoform (1009 aa).

Positions 1–32 are cleaved as a signal peptide; sequence MTAQKSKYFNRIMTMNTLLFSLLTVGFSQAYA. Residue 137–138 participates in substrate binding; sequence SH. Residue His138 is the Proton donor/acceptor of the active site. Residues Asp200, Asp210, and Lys212 each contribute to the Ca(2+) site. Substrate-binding residues include Tyr291 and Arg308. Ca(2+) is bound by residues Asp311, Asp314, and Tyr316. Tyr372 provides a ligand contact to substrate.

It belongs to the polysaccharide lyase 24 family.

In terms of biological role, ulvan lyase involved in ulvan degradation. Ulvan is the main polysaccharide component of the Ulvales (green seaweed) cell wall. It is composed of disaccharide building blocks comprising 3-sulfated rhamnose (Rha3S) linked to D-glucuronic acid (GlcA), L-iduronic acid (IduA), or D-xylose (Xyl). Ulvan lyase catalyzes preferentially the endolytic cleavage of the glycosidic bond between Rha3S and the uronic acid GlcA, but not IduA, producing oligosaccharides that have unsaturated 4-deoxy-L-threo-hex-4-enopyranosiduronic acid (deltaUA) at the non-reducing end. The most abundant end products in the degradation of the ulvan polysaccharide were deltaUA-Rha3S disaccharides and deltaUA-Rha3S-IduA-Rha3S and deltaUA-Rha3S-Xyl-Rha3S tetrasaccharides. This chain is Ulvan lyase, long isoform (ullA), found in Glaciecola sp. (strain KUL10).